Here is a 152-residue protein sequence, read N- to C-terminus: Probable ribose-5-phosphate isomerase B (152 aa).

10 to 11 (DH) contacts D-ribulose 5-phosphate. The active-site Proton acceptor is Cys69. 70 to 74 (GTGVG) is a D-ribulose 5-phosphate binding site. The active-site Proton donor is the His102. Residues Asp103, Arg113, Arg136, and Arg140 each coordinate D-ribulose 5-phosphate.

This sequence belongs to the LacAB/RpiB family. In terms of assembly, homodimer.

It catalyses the reaction aldehydo-D-ribose 5-phosphate = D-ribulose 5-phosphate. It functions in the pathway carbohydrate degradation; pentose phosphate pathway; D-ribose 5-phosphate from D-ribulose 5-phosphate (non-oxidative stage): step 1/1. Its function is as follows. Catalyzes the interconversion of ribulose-5-P and ribose-5-P. This is Probable ribose-5-phosphate isomerase B from Mycoplasma genitalium (strain ATCC 33530 / DSM 19775 / NCTC 10195 / G37) (Mycoplasmoides genitalium).